The sequence spans 199 residues: MQFEVKDLINKIKKDGLEEAERISNDIIFKAKKEAEEIVARAEEAVGALKAKSEKEINDYKRHALEASRQAIRDLIIGVEKNLKSLFENTLKDNVAEVFSDNDFLSELIIKITDSWIKEEKLVIQLNESDFSGLEQILRLKLGNKLKEGIEIKPFKGISKGFKIQKKNTGLQYDFSVETIADILFDYLNPRFKEVIKVV.

The protein belongs to the V-ATPase E subunit family.

Its function is as follows. Produces ATP from ADP in the presence of a proton gradient across the membrane. The sequence is that of V-type ATP synthase subunit E from Borrelia garinii subsp. bavariensis (strain ATCC BAA-2496 / DSM 23469 / PBi) (Borreliella bavariensis).